We begin with the raw amino-acid sequence, 1031 residues long: MRPAALLLCLTLLHCAGAGFPEDSEPISISHGNYTKQYPVFVGHKPGRNTTQRHRLDIQMIMIMNRTLYVAARDHIYTVDIDTSHTEEIYCSKKLTWKSRQADVDTCRMKGKHKDECHNFIKVLLKKNDDTLFVCGTNAFNPSCRNYRVDTLETFGDEFSGMARCPYDAKHANIALFADGKLYSATVTDFLAIDAVIYRSLGDSPTLRTVKHDSKWLKEPYFVQAVDYGDYIYFFFREIAVEYNTMGKVVFPRVAQVCKNDMGGSQRVLEKQWTSFLKARLNCSVPGDSHFYFNILQAVTDVIRINGRDVVLATFSTPYNSIPGSAVCAYDMLDIANVFTGRFKEQKSPDSTWTPVPDERVPKPRPGCCAGSSSLEKYATSNEFPDDTLNFIKTHPLMDEAVPSIINRPWFLRTMVRYRLTKIAVDNAAGPYQNHTVVFLGSEKGIILKFLARIGSSGFLNGSLFLEEMNVYNPEKCSYDGVEDKRIMGMQLDRASGSLYVAFSTCVIKVPLGRCERHGKCKKTCIASRDPYCGWVRESGSCAHLSPLSRLTFEQDIERGNTDGLGDCHNSFVALNGHASSLYPSTTTSDSASRDGYESRGGMLDWNDLLEAPGSTDPLGAVSSHNHQDKKGVIRESYLKSNDQLVPVTLLAIAVILAFVMGAVFSGIIVYCVCDHRRKDVAVVQRKEKELTHSRRGSMSSVTKLSGLFGDTQSKDPKPEAILTPLMHNGKLATPSNTAKMLIKADQHHLDLTALPTPESTPTLQQKRKPNRGSREWERNQNIINACTKDMPPMGSPVIPTDLPLRASPSHIPSVVVLPITQQGYQHEYVDQPKMSEVVAQMALEDQAATLEYKTIKEHLSSKSPNHGVNLVENLDSLPPKVPQREASLGPPGTSLSQTGLSKRLEMQHSSSYGLEYKRSYPTNSLTRSHQTTTLKRNNTNSSNSSHLSRNQSFGRGDNPPPAPQRVDSIQVHSSQPSGQAVTVSRQPSLNAYNSLTRSGLKRTPSLKPDVPPKPSFAPLSTSMKPNDACT.

The N-terminal stretch at 1 to 18 (MRPAALLLCLTLLHCAGA) is a signal peptide. The Extracellular segment spans residues 19-649 (GFPEDSEPIS…KSNDQLVPVT (631 aa)). The Sema domain occupies 24-512 (SEPISISHGN…FSTCVIKVPL (489 aa)). 3 N-linked (GlcNAc...) asparagine glycosylation sites follow: asparagine 33, asparagine 49, and asparagine 65. Cystine bridges form between cysteine 107–cysteine 117, cysteine 135–cysteine 144, cysteine 258–cysteine 369, and cysteine 283–cysteine 328. A glycan (N-linked (GlcNAc...) asparagine) is linked at asparagine 282. 2 N-linked (GlcNAc...) asparagine glycosylation sites follow: asparagine 434 and asparagine 461. Cystine bridges form between cysteine 477/cysteine 506, cysteine 515/cysteine 533, cysteine 521/cysteine 568, and cysteine 525/cysteine 542. Residues 650-670 (LLAIAVILAFVMGAVFSGIIV) traverse the membrane as a helical segment. The Cytoplasmic portion of the chain corresponds to 671–1031 (YCVCDHRRKD…TSMKPNDACT (361 aa)). Serine 698 is subject to Phosphoserine. Disordered regions lie at residues 754-777 (ALPT…SREW), 861-902 (SSKS…TGLS), and 914-1031 (GLEY…DACT). A compositionally biased stretch (polar residues) spans 921–931 (YPTNSLTRSHQ). Positions 932-951 (TTTLKRNNTNSSNSSHLSRN) are enriched in low complexity. Serine 953 bears the Phosphoserine mark. Polar residues-rich tracts occupy residues 971–998 (QVHS…SLTR) and 1019–1031 (PLST…DACT).

Belongs to the semaphorin family. In terms of assembly, active as a homodimer or oligomer. The SEMA6A homodimer interacts with a PLXNA2 homodimer, giving rise to a heterotetramer. Interacts with EVL. Particularly high levels in spinal cord, cerebellum, metencephalon, superior and inferior colliculus, diencephalon, olfactory bulb and eye.

It is found in the cell membrane. Functionally, cell surface receptor for PLXNA2 that plays an important role in cell-cell signaling. Required for normal granule cell migration in the developing cerebellum. Promotes reorganization of the actin cytoskeleton and plays an important role in axon guidance in the developing central nervous system. Can act as repulsive axon guidance cue. Has repulsive action towards migrating granular neurons. May play a role in channeling sympathetic axons into the sympathetic chains and controlling the temporal sequence of sympathetic target innervation. This is Semaphorin-6A (Sema6a) from Mus musculus (Mouse).